Reading from the N-terminus, the 845-residue chain is Protein translocase subunit SecA (845 aa).

Residues Gln88, 106–110 (GEGKT), and Asp495 contribute to the ATP site. The interval 804 to 838 (SNRANRPQKKAKRQPIVKPDKPGRNDPCPCGSGKK) is disordered. Basic residues predominate over residues 809–818 (RPQKKAKRQP). Residues Cys831, Cys833, Cys842, and Cys843 each coordinate Zn(2+).

The protein belongs to the SecA family. In terms of assembly, monomer and homodimer. Part of the essential Sec protein translocation apparatus which comprises SecA, SecYEG and auxiliary proteins SecDF. Other proteins may also be involved. It depends on Zn(2+) as a cofactor.

The protein localises to the cell inner membrane. Its subcellular location is the cytoplasm. The catalysed reaction is ATP + H2O + cellular proteinSide 1 = ADP + phosphate + cellular proteinSide 2.. In terms of biological role, part of the Sec protein translocase complex. Interacts with the SecYEG preprotein conducting channel. Has a central role in coupling the hydrolysis of ATP to the transfer of proteins into and across the cell membrane, serving as an ATP-driven molecular motor driving the stepwise translocation of polypeptide chains across the membrane. The polypeptide is Protein translocase subunit SecA (Halothermothrix orenii (strain H 168 / OCM 544 / DSM 9562)).